Consider the following 216-residue polypeptide: 3-isopropylmalate dehydratase small subunit (216 aa).

Belongs to the LeuD family. LeuD type 1 subfamily. Heterodimer of LeuC and LeuD.

The catalysed reaction is (2R,3S)-3-isopropylmalate = (2S)-2-isopropylmalate. Its pathway is amino-acid biosynthesis; L-leucine biosynthesis; L-leucine from 3-methyl-2-oxobutanoate: step 2/4. Its function is as follows. Catalyzes the isomerization between 2-isopropylmalate and 3-isopropylmalate, via the formation of 2-isopropylmaleate. The chain is 3-isopropylmalate dehydratase small subunit from Burkholderia thailandensis (strain ATCC 700388 / DSM 13276 / CCUG 48851 / CIP 106301 / E264).